A 77-amino-acid polypeptide reads, in one-letter code: Sec-independent protein translocase protein TatA (77 aa).

The helical transmembrane segment at Met1–Gly21 threads the bilayer. Residues Ala50 to Ser77 are disordered. The segment covering Ser53–Gln62 has biased composition (polar residues). Basic and acidic residues predominate over residues Gly66–Ser77.

Belongs to the TatA/E family. In terms of assembly, the Tat system comprises two distinct complexes: a TatABC complex, containing multiple copies of TatA, TatB and TatC subunits, and a separate TatA complex, containing only TatA subunits. Substrates initially bind to the TatABC complex, which probably triggers association of the separate TatA complex to form the active translocon.

The protein resides in the cell inner membrane. Functionally, part of the twin-arginine translocation (Tat) system that transports large folded proteins containing a characteristic twin-arginine motif in their signal peptide across membranes. TatA could form the protein-conducting channel of the Tat system. This chain is Sec-independent protein translocase protein TatA, found in Azoarcus sp. (strain BH72).